Consider the following 223-residue polypeptide: Protein-L-isoaspartate O-methyltransferase (223 aa).

S70 is a catalytic residue.

Belongs to the methyltransferase superfamily. L-isoaspartyl/D-aspartyl protein methyltransferase family.

It is found in the cytoplasm. It catalyses the reaction [protein]-L-isoaspartate + S-adenosyl-L-methionine = [protein]-L-isoaspartate alpha-methyl ester + S-adenosyl-L-homocysteine. Catalyzes the methyl esterification of L-isoaspartyl residues in peptides and proteins that result from spontaneous decomposition of normal L-aspartyl and L-asparaginyl residues. It plays a role in the repair and/or degradation of damaged proteins. The polypeptide is Protein-L-isoaspartate O-methyltransferase (Methylobacillus flagellatus (strain ATCC 51484 / DSM 6875 / VKM B-1610 / KT)).